A 381-amino-acid chain; its full sequence is Chaperone protein DnaJ (381 aa).

One can recognise a J domain in the interval 5–70; the sequence is DFYEVLGVGR…QKKAAYDQYG (66 aa). The CR-type zinc-finger motif lies at 136 to 214; that stretch reads GVSKEIEVPT…CHGQGRKQKT (79 aa). The Zn(2+) site is built by Cys-149, Cys-152, Cys-166, Cys-169, Cys-188, Cys-191, Cys-202, and Cys-205. 4 CXXCXGXG motif repeats span residues 149–156, 166–173, 188–195, and 202–209; these read CDTCDGSG, CGTCHGHG, CPTCHGKG, and CNECHGQG.

Belongs to the DnaJ family. As to quaternary structure, homodimer. It depends on Zn(2+) as a cofactor.

It localises to the cytoplasm. Its function is as follows. Participates actively in the response to hyperosmotic and heat shock by preventing the aggregation of stress-denatured proteins and by disaggregating proteins, also in an autonomous, DnaK-independent fashion. Unfolded proteins bind initially to DnaJ; upon interaction with the DnaJ-bound protein, DnaK hydrolyzes its bound ATP, resulting in the formation of a stable complex. GrpE releases ADP from DnaK; ATP binding to DnaK triggers the release of the substrate protein, thus completing the reaction cycle. Several rounds of ATP-dependent interactions between DnaJ, DnaK and GrpE are required for fully efficient folding. Also involved, together with DnaK and GrpE, in the DNA replication of plasmids through activation of initiation proteins. This chain is Chaperone protein DnaJ, found in Vibrio campbellii (strain ATCC BAA-1116).